A 450-amino-acid chain; its full sequence is Tubulin alpha chain (450 aa).

Gln-11 contacts GTP. Lys-40 carries the N6-acetyllysine modification. GTP contacts are provided by Glu-71, Ser-140, Gly-144, Thr-145, Thr-179, Asn-206, and Asn-228. A Mg(2+)-binding site is contributed by Glu-71. Residue Glu-254 is part of the active site.

The protein belongs to the tubulin family. Dimer of alpha and beta chains. A typical microtubule is a hollow water-filled tube with an outer diameter of 25 nm and an inner diameter of 15 nM. Alpha-beta heterodimers associate head-to-tail to form protofilaments running lengthwise along the microtubule wall with the beta-tubulin subunit facing the microtubule plus end conferring a structural polarity. Microtubules usually have 13 protofilaments but different protofilament numbers can be found in some organisms and specialized cells. It depends on Mg(2+) as a cofactor. Post-translationally, acetylation of alpha chains at Lys-40 stabilizes microtubules and affects affinity and processivity of microtubule motors. This modification has a role in multiple cellular functions, ranging from cell motility, cell cycle progression or cell differentiation to intracellular trafficking and signaling.

The protein localises to the cytoplasm. Its subcellular location is the cytoskeleton. It catalyses the reaction GTP + H2O = GDP + phosphate + H(+). Its function is as follows. Tubulin is the major constituent of microtubules, a cylinder consisting of laterally associated linear protofilaments composed of alpha- and beta-tubulin heterodimers. Microtubules grow by the addition of GTP-tubulin dimers to the microtubule end, where a stabilizing cap forms. Below the cap, tubulin dimers are in GDP-bound state, owing to GTPase activity of alpha-tubulin. This Tyrophagus putrescentiae (Mold mite) protein is Tubulin alpha chain.